Here is a 302-residue protein sequence, read N- to C-terminus: Segregation and condensation protein A (302 aa).

It belongs to the ScpA family. In terms of assembly, component of a cohesin-like complex composed of ScpA, ScpB and the Smc homodimer, in which ScpA and ScpB bind to the head domain of Smc. The presence of the three proteins is required for the association of the complex with DNA.

The protein resides in the cytoplasm. Its function is as follows. Participates in chromosomal partition during cell division. May act via the formation of a condensin-like complex containing Smc and ScpB that pull DNA away from mid-cell into both cell halves. The protein is Segregation and condensation protein A of Xylella fastidiosa (strain 9a5c).